A 651-amino-acid polypeptide reads, in one-letter code: Probable potassium transport system protein Kup (651 aa).

The next 12 helical transmembrane spans lie at 41–61 (LVLG…IYAF), 82–102 (VVSL…VLFV), 130–150 (LILG…VITP), 163–183 (IVAP…LVTL), 194–214 (VAIV…ASGL), 235–255 (FLTV…LAMT), 276–296 (WLWI…AFIL), 309–329 (MIPS…TVIA), 366–386 (IYIP…VLGF), 395–415 (AYGI…YIVM), 426–446 (ALPI…ANII), and 450–470 (EGGW…WTWV).

The protein belongs to the HAK/KUP transporter (TC 2.A.72) family.

The protein localises to the cell inner membrane. It catalyses the reaction K(+)(in) + H(+)(in) = K(+)(out) + H(+)(out). In terms of biological role, transport of potassium into the cell. Likely operates as a K(+):H(+) symporter. The sequence is that of Probable potassium transport system protein Kup from Brucella canis (strain ATCC 23365 / NCTC 10854 / RM-666).